We begin with the raw amino-acid sequence, 506 residues long: Histidine ammonia-lyase (506 aa).

Positions 143–145 (ASG) form a cross-link, 5-imidazolinone (Ala-Gly). S144 carries the post-translational modification 2,3-didehydroalanine (Ser).

It belongs to the PAL/histidase family. In terms of processing, contains an active site 4-methylidene-imidazol-5-one (MIO), which is formed autocatalytically by cyclization and dehydration of residues Ala-Ser-Gly.

It localises to the cytoplasm. It catalyses the reaction L-histidine = trans-urocanate + NH4(+). It participates in amino-acid degradation; L-histidine degradation into L-glutamate; N-formimidoyl-L-glutamate from L-histidine: step 1/3. The chain is Histidine ammonia-lyase from Salmonella dublin (strain CT_02021853).